A 226-amino-acid chain; its full sequence is Agamous-like MADS-box protein AP3 (226 aa).

The region spanning 1 to 61 is the MADS-box domain; sequence MARGKIEIKR…GKLHEYISPS (61 aa). The region spanning 84–174 is the K-box domain; sequence YERMQENLKK…LHEFDARDRD (91 aa).

In terms of tissue distribution, expressed during flower development in stamens and petals.

Its subcellular location is the nucleus. In terms of biological role, probable transcription factor involved in flower development. The protein is Agamous-like MADS-box protein AP3 of Vitis vinifera (Grape).